Reading from the N-terminus, the 802-residue chain is Ent-copalyl diphosphate synthase, chloroplastic (802 aa).

Residues 1-60 (MSLQYHVLNSIPSTTFLSSTKTTISSSFLTISGSPLNVARDKSRSGSIHCSKLRTQEYIN) constitute a chloroplast transit peptide. A substrate-binding site is contributed by lysine 245. Mg(2+) is bound by residues aspartate 377 and aspartate 379. Positions 377–380 (DIDD) match the DXDD motif motif. A substrate-binding site is contributed by lysine 463.

It belongs to the terpene synthase family. Tpsc subfamily. It depends on Mg(2+) as a cofactor. Post-translationally, the N-terminus is blocked. In terms of tissue distribution, expressed in roots, leaves, flowers and also in siliques.

It is found in the plastid. It localises to the chloroplast. It catalyses the reaction (2E,6E,10E)-geranylgeranyl diphosphate = ent-copalyl diphosphate. The protein operates within plant hormone biosynthesis; gibberellin biosynthesis. Its activity is regulated as follows. Inhibited by high concentrations of magnesium. In terms of biological role, catalyzes the conversion of geranylgeranyl diphosphate to the gibberellin precursor ent-copalyl diphosphate. The protein is Ent-copalyl diphosphate synthase, chloroplastic (GA1) of Arabidopsis thaliana (Mouse-ear cress).